A 434-amino-acid chain; its full sequence is Glutamate-1-semialdehyde 2,1-aminomutase 1 (434 aa).

Position 268 is an N6-(pyridoxal phosphate)lysine (Lys-268).

It belongs to the class-III pyridoxal-phosphate-dependent aminotransferase family. HemL subfamily. As to quaternary structure, homodimer. The cofactor is pyridoxal 5'-phosphate.

It is found in the cytoplasm. The enzyme catalyses (S)-4-amino-5-oxopentanoate = 5-aminolevulinate. It participates in porphyrin-containing compound metabolism; protoporphyrin-IX biosynthesis; 5-aminolevulinate from L-glutamyl-tRNA(Glu): step 2/2. This is Glutamate-1-semialdehyde 2,1-aminomutase 1 from Shouchella clausii (strain KSM-K16) (Alkalihalobacillus clausii).